The primary structure comprises 357 residues: Alkanal monooxygenase alpha chain (357 aa).

This sequence belongs to the bacterial luciferase oxidoreductase family. Heterodimer of an alpha and a beta chain.

The catalysed reaction is a long-chain fatty aldehyde + FMNH2 + O2 = a long-chain fatty acid + hnu + FMN + H2O + 2 H(+). Light-emitting reaction in luminous bacteria. In Kryptophanaron alfredi symbiont, this protein is Alkanal monooxygenase alpha chain (luxA).